A 117-amino-acid chain; its full sequence is NADH-ubiquinone oxidoreductase chain 3 (117 aa).

The next 3 membrane-spanning stretches (helical) occupy residues 5 to 25 (ALSS…AWVL), 57 to 77 (FFLL…LMPL), and 86 to 106 (VFTT…GLIH).

The protein belongs to the complex I subunit 3 family.

The protein resides in the mitochondrion membrane. It catalyses the reaction a ubiquinone + NADH + 5 H(+)(in) = a ubiquinol + NAD(+) + 4 H(+)(out). Functionally, core subunit of the mitochondrial membrane respiratory chain NADH dehydrogenase (Complex I) that is believed to belong to the minimal assembly required for catalysis. Complex I functions in the transfer of electrons from NADH to the respiratory chain. The immediate electron acceptor for the enzyme is believed to be ubiquinone. This chain is NADH-ubiquinone oxidoreductase chain 3 (ND3), found in Lumbricus terrestris (Common earthworm).